The primary structure comprises 451 residues: Chromosomal replication initiator protein DnaA (451 aa).

The interval 1–77 is domain I, interacts with DnaA modulators; that stretch reads MTENEQIFWN…EVYNAQISVD (77 aa). The tract at residues 77 to 110 is domain II; that stretch reads DYVFEEDLMIEQNQTKINQKPKQQALNSLPTVTS. Positions 111 to 329 are domain III, AAA+ region; that stretch reads DLNPKYSFEN…GALKDISLVA (219 aa). ATP contacts are provided by Gly155, Gly157, Lys158, and Thr159. The tract at residues 330 to 451 is domain IV, binds dsDNA; the sequence is NFKQIDTITV…EIETIKNKIK (122 aa).

It belongs to the DnaA family. In terms of assembly, oligomerizes as a right-handed, spiral filament on DNA at oriC.

It is found in the cytoplasm. Its function is as follows. Plays an essential role in the initiation and regulation of chromosomal replication. ATP-DnaA binds to the origin of replication (oriC) to initiate formation of the DNA replication initiation complex once per cell cycle. Binds the DnaA box (a 9 base pair repeat at the origin) and separates the double-stranded (ds)DNA. Forms a right-handed helical filament on oriC DNA; dsDNA binds to the exterior of the filament while single-stranded (ss)DNA is stabiized in the filament's interior. The ATP-DnaA-oriC complex binds and stabilizes one strand of the AT-rich DNA unwinding element (DUE), permitting loading of DNA polymerase. After initiation quickly degrades to an ADP-DnaA complex that is not apt for DNA replication. Binds acidic phospholipids. In Streptococcus pyogenes serotype M4 (strain MGAS10750), this protein is Chromosomal replication initiator protein DnaA.